The primary structure comprises 403 residues: S-adenosylmethionine synthase (403 aa).

Residue H17 coordinates ATP. D19 lines the Mg(2+) pocket. E45 provides a ligand contact to K(+). Residues E58 and Q104 each coordinate L-methionine. A flexible loop region spans residues 104-114 (QSPDIAQGVDT). ATP contacts are provided by residues 179 to 181 (DGK), 250 to 251 (KF), D259, 265 to 266 (RK), A282, and K286. Position 259 (D259) interacts with L-methionine. K290 provides a ligand contact to L-methionine.

This sequence belongs to the AdoMet synthase family. Homotetramer; dimer of dimers. The cofactor is Mg(2+). Requires K(+) as cofactor.

The protein resides in the cytoplasm. It catalyses the reaction L-methionine + ATP + H2O = S-adenosyl-L-methionine + phosphate + diphosphate. It participates in amino-acid biosynthesis; S-adenosyl-L-methionine biosynthesis; S-adenosyl-L-methionine from L-methionine: step 1/1. Functionally, catalyzes the formation of S-adenosylmethionine (AdoMet) from methionine and ATP. The overall synthetic reaction is composed of two sequential steps, AdoMet formation and the subsequent tripolyphosphate hydrolysis which occurs prior to release of AdoMet from the enzyme. In Mycobacterium ulcerans (strain Agy99), this protein is S-adenosylmethionine synthase.